The primary structure comprises 431 residues: Glutamyl-tRNA reductase (431 aa).

Substrate is bound by residues Thr-49–Arg-52, Ser-109, Glu-114–Gln-116, and Gln-120. Cys-50 functions as the Nucleophile in the catalytic mechanism. Gly-189 to Ala-194 provides a ligand contact to NADP(+).

The protein belongs to the glutamyl-tRNA reductase family. In terms of assembly, homodimer.

The catalysed reaction is (S)-4-amino-5-oxopentanoate + tRNA(Glu) + NADP(+) = L-glutamyl-tRNA(Glu) + NADPH + H(+). It participates in porphyrin-containing compound metabolism; protoporphyrin-IX biosynthesis; 5-aminolevulinate from L-glutamyl-tRNA(Glu): step 1/2. The protein operates within porphyrin-containing compound metabolism; chlorophyll biosynthesis. Catalyzes the NADPH-dependent reduction of glutamyl-tRNA(Glu) to glutamate 1-semialdehyde (GSA). The chain is Glutamyl-tRNA reductase from Synechococcus sp. (strain JA-3-3Ab) (Cyanobacteria bacterium Yellowstone A-Prime).